Consider the following 414-residue polypeptide: Stork-head box protein ham-1 (414 aa).

Residues Met1 to Phe31 form an essential for association with cell cortex region. The region spanning Gln93 to Pro170 is the Winged helix Storkhead-box1 domain. Residues Glu282–Asp362 are disordered. Positions Arg285–Arg295 are bi-partite nuclear localization signal. The interval Pro321 to Arg327 is nuclear localization signal. Over residues Leu332–Thr351 the composition is skewed to polar residues.

The protein localises to the cytoplasm. It is found in the cell cortex. Its subcellular location is the nucleus. In terms of biological role, probable transcription factor. Required for asymmetric cell division in neuroblasts, perhaps acting by regulating spindle positioning and myosin polarization, and thus the position of the cleavage plane. Required to produce daughter cell size asymmetry in neuroblasts undergoing asymmetric cell division, usually giving rise to one precursor cell and one apoptotic cell. Positively modulates expression of the serine/threonine kinase pig-1/MELK during asymmetric division of the Q.a neuroblast. Plays a role in neural fate specification in several dopaminergic lineages, including the hermaphrodite-specific neuron (HSN)/phasmid neuron (PHB), acting in concert with the kinase, ham-1, and the T-box protein tbx-2 and the homeobox protein egl-5. This is Stork-head box protein ham-1 from Caenorhabditis elegans.